Reading from the N-terminus, the 366-residue chain is 3-isopropylmalate dehydrogenase (366 aa).

An NAD(+)-binding site is contributed by 76–89; sequence GPKWDANPSHLRPE. Substrate contacts are provided by arginine 96, arginine 106, arginine 134, and aspartate 219. 3 residues coordinate Mg(2+): aspartate 219, aspartate 243, and aspartate 247. 277-289 is an NAD(+) binding site; the sequence is GSAPDIAGKGIAN.

This sequence belongs to the isocitrate and isopropylmalate dehydrogenases family. LeuB type 1 subfamily. As to quaternary structure, homodimer. The cofactor is Mg(2+). It depends on Mn(2+) as a cofactor.

The protein localises to the cytoplasm. The enzyme catalyses (2R,3S)-3-isopropylmalate + NAD(+) = 4-methyl-2-oxopentanoate + CO2 + NADH. It participates in amino-acid biosynthesis; L-leucine biosynthesis; L-leucine from 3-methyl-2-oxobutanoate: step 3/4. In terms of biological role, catalyzes the oxidation of 3-carboxy-2-hydroxy-4-methylpentanoate (3-isopropylmalate) to 3-carboxy-4-methyl-2-oxopentanoate. The product decarboxylates to 4-methyl-2 oxopentanoate. This is 3-isopropylmalate dehydrogenase from Oceanobacillus iheyensis (strain DSM 14371 / CIP 107618 / JCM 11309 / KCTC 3954 / HTE831).